The primary structure comprises 780 residues: Cullin-5 (780 aa).

Ser-34 carries the phosphoserine modification. Position 210 is a phosphothreonine (Thr-210). The region spanning 711–772 (RILRTQEAII…HKYIRRDESD (62 aa)) is the Cullin neddylation domain. Lys-724 is covalently cross-linked (Glycyl lysine isopeptide (Lys-Gly) (interchain with G-Cter in NEDD8)).

This sequence belongs to the cullin family. In terms of assembly, component of multiple cullin-5-RING E3 ubiquitin-protein ligase complexes (ECS complexes, also named CRL5 complexes) formed of CUL5, Elongin BC (ELOB and ELOC), RNF7/RBX2 and a variable SOCS box domain-containing protein as substrate-specific recognition component. CUL5-containing ECS complexes specifically contain RNF7/RBX2, and not RBX1, as catalytic subunit. Component of the ECS(ASB2) complex with the substrate recognition component ASB2. Component of the ECS(ASB6) complex with the substrate recognition component ASB6. Component of the ECS(ASB7) complex with the substrate recognition component ASB7. Component of the ECS(ASB9) complex with the substrate recognition component ASB9. Component of the ECS(ASB11) complex with the substrate recognition component ASB11. Component of the ECS(ASB12) complex with the substrate recognition component ASB12. Component of the ECS(LRRC41) complex with the substrate recognition component LRRC41. Component of the ECS(SOCS1) complex with the substrate recognition component SOCS1. Component of the ECS(SOCS2) complex with the substrate recognition component SOCS2. Component of the ECS(WSB1) complex with the substrate recognition subunit WSB1. Component of the ECS(SOCS3) complex with the substrate recognition component SOCS3. Component of the ECS(SOCS7) complex with the substrate recognition component SOCS7. Component of the ECS(SPSB1) complex with the substrate recognition component SPSB1. Component of the ECS(SPSB3) complex with the substrate recognition component SPSB3. Component of the ECS(SPSB2) complex with the substrate recognition component SPSB2. Component of the ECS(SPSB4) complex with the substrate recognition component SPSB4. Component of the ECS(RAB40) complex with the substrate recognition subunit RAB40A, RAB40B or RAB40C. Component of the ECS(KLHDC1) complex with the substrate recognition component KLHDC1. Component of the ECS(PCMTD1) complex with the substrate recognition subunit PCMTD1. May also form complexes containing RBX1 and ELOA or VHL; additional evidence is however required to confirm this result in vivo. Interacts (when neddylated) with ARIH2; leading to activate the E3 ligase activity of ARIH2. Interacts with ERCC6; the interaction is induced by DNA damaging agents or inhibitors of RNA polymerase II elongation. Interacts with ELOA (via the BC-box). Interacts (unneddylated form) with DCUN1D1, DCUN1D2, DCUN1D3, DCUN1D4 and DCUN1D5; these interactions promote the cullin neddylation. As to quaternary structure, (Microbial infection) Interacts (via the substrate recognition component) with HIV-1 Vif; forming an active cullin-5-RING E3 ubiquitin-protein ligase complex (ECS complex). (Microbial infection) Interacts (via the substrate recognition component) with human adenovirus 5 proteins E1B-55K and E4-orf6. In terms of assembly, (Microbial infection) Interacts with herpes virus 8 protein LANA1; this interaction promotes the degradation of NF-kappa-B component RELA. As to quaternary structure, (Microbial infection) Interacts with molluscum contagiosum virus protein MC132; this interaction promotes the degradation of NF-kappa-B component RELA. In terms of processing, neddylated; which enhances the ubiquitination activity of ECS complexes and prevents binding of the inhibitor CAND1. Deneddylated via its interaction with the COP9 signalosome (CSN).

The protein resides in the nucleus. Its pathway is protein modification; protein ubiquitination. In terms of biological role, core component of multiple cullin-5-RING E3 ubiquitin-protein ligase complexes (ECS complexes, also named CRL5 complexes), which mediate the ubiquitination and subsequent proteasomal degradation of target proteins. Acts a scaffold protein that contributes to catalysis through positioning of the substrate and the ubiquitin-conjugating enzyme. The functional specificity of the E3 ubiquitin-protein ligase complex depends on the variable SOCS box-containing substrate recognition component. Acts as a key regulator of neuron positioning during cortex development: component of various SOCS-containing ECS complexes, such as the ECS(SOCS7) complex, that regulate reelin signaling by mediating ubiquitination and degradation of DAB1. ECS(SOCS1) seems to direct ubiquitination of JAK2. The ECS(SOCS2) complex mediates the ubiquitination and subsequent proteasomal degradation of phosphorylated EPOR and GHR. The ECS(SPSB3) complex catalyzes ubiquitination of nuclear CGAS. ECS(KLHDC1) complex is part of the DesCEND (destruction via C-end degrons) pathway and mediates ubiquitination and degradation of truncated SELENOS selenoprotein produced by failed UGA/Sec decoding, which ends with a glycine. The ECS(ASB9) complex mediates ubiquitination and degradation of CKB. As part of some ECS complex, promotes 'Lys-11'-linked ubiquitination and degradation of BTRC. As part of a multisubunit ECS complex, polyubiquitinates monoubiquitinated POLR2A. As part of the ECS(RAB40C) complex, mediates ANKRD28 ubiquitination and degradation, thereby inhibiting protein phosphatase 6 (PP6) complex activity and focal adhesion assembly during cell migration. As part of the ECS(RAB40A) complex, mediates RHOU 'Lys-48'-linked ubiquitination and degradation, thus inhibiting focal adhesion disassembly during cell migration. As part of the ECS(RAB40B) complex, mediates LIMA1/EPLIN and RAP2 ubiquitination, thereby regulating actin cytoskeleton dynamics and stress fiber formation during cell migration. May form a cell surface vasopressin receptor. Its function is as follows. (Microbial infection) Following infection by HIV-1 virus, CUL5 associates with HIV-1 Vif proteins and forms a cullin-5-RING E3 ubiquitin-protein ligase complex (ECS complex) that catalyzes ubiquitination and degradation of APOBEC3F and APOBEC3G. The complex can also ubiquitinate APOBEC3H to some extent. Functionally, (Microbial infection) Seems to be involved in proteasomal degradation of p53/TP53 stimulated by adenovirus E1B-55 kDa protein. The polypeptide is Cullin-5 (Homo sapiens (Human)).